A 300-amino-acid polypeptide reads, in one-letter code: Protein TRACHEARY ELEMENT DIFFERENTIATION-RELATED 7A (300 aa).

The disordered stretch occupies residues 1 to 181 (MASPLSQSVF…HIIPPPPPSP (181 aa)). At 1–187 (MASPLSQSVF…PPSPSNHSTT (187 aa)) the chain is on the extracellular side. A compositionally biased stretch (pro residues) spans 12 to 181 (HFPPPSPAAT…HIIPPPPPSP (170 aa)). Residue Asn-183 is glycosylated (N-linked (GlcNAc...) asparagine). A helical membrane pass occupies residues 188-208 (IVVIFVSCGGVFFLAFAMAAL). Over 209-300 (WCFLKKKKKK…SSFGHHYLHG (92 aa)) the chain is Cytoplasmic.

Accumulates in cells differentiating into tracheary element (TE) which undergo secondary cell wall (SCW) formation.

The protein resides in the cell membrane. The protein localises to the secreted. It is found in the cell wall. Its function is as follows. Involved in the secondary cell wall (SCW) formation of vessel elements (e.g. protoxylem and metaxylem), thus promoting tracheary element (TE) differentiation. This is Protein TRACHEARY ELEMENT DIFFERENTIATION-RELATED 7A from Zinnia elegans (Garden zinnia).